The primary structure comprises 39 residues: Cytochrome b559 subunit beta (39 aa).

The helical transmembrane segment at 14–30 (WLAVHGLAVPTVFFLGS) threads the bilayer. His18 is a heme binding site.

It belongs to the PsbE/PsbF family. Heterodimer of an alpha subunit and a beta subunit. PSII is composed of 1 copy each of membrane proteins PsbA, PsbB, PsbC, PsbD, PsbE, PsbF, PsbH, PsbI, PsbJ, PsbK, PsbL, PsbM, PsbT, PsbX, PsbY, PsbZ, Psb30/Ycf12, at least 3 peripheral proteins of the oxygen-evolving complex and a large number of cofactors. It forms dimeric complexes. The cofactor is heme b.

The protein localises to the plastid. It localises to the chloroplast thylakoid membrane. In terms of biological role, this b-type cytochrome is tightly associated with the reaction center of photosystem II (PSII). PSII is a light-driven water:plastoquinone oxidoreductase that uses light energy to abstract electrons from H(2)O, generating O(2) and a proton gradient subsequently used for ATP formation. It consists of a core antenna complex that captures photons, and an electron transfer chain that converts photonic excitation into a charge separation. The chain is Cytochrome b559 subunit beta from Adiantum capillus-veneris (Maidenhair fern).